The primary structure comprises 373 residues: 4-hydroxy-3-methylbut-2-en-1-yl diphosphate synthase (flavodoxin) (373 aa).

[4Fe-4S] cluster-binding residues include Cys-270, Cys-273, Cys-305, and Glu-312.

This sequence belongs to the IspG family. [4Fe-4S] cluster is required as a cofactor.

It carries out the reaction (2E)-4-hydroxy-3-methylbut-2-enyl diphosphate + oxidized [flavodoxin] + H2O + 2 H(+) = 2-C-methyl-D-erythritol 2,4-cyclic diphosphate + reduced [flavodoxin]. Its pathway is isoprenoid biosynthesis; isopentenyl diphosphate biosynthesis via DXP pathway; isopentenyl diphosphate from 1-deoxy-D-xylulose 5-phosphate: step 5/6. Functionally, converts 2C-methyl-D-erythritol 2,4-cyclodiphosphate (ME-2,4cPP) into 1-hydroxy-2-methyl-2-(E)-butenyl 4-diphosphate. The sequence is that of 4-hydroxy-3-methylbut-2-en-1-yl diphosphate synthase (flavodoxin) from Serratia proteamaculans (strain 568).